A 159-amino-acid chain; its full sequence is Transcription elongation factor GreA (159 aa).

This sequence belongs to the GreA/GreB family.

Its function is as follows. Necessary for efficient RNA polymerase transcription elongation past template-encoded arresting sites. The arresting sites in DNA have the property of trapping a certain fraction of elongating RNA polymerases that pass through, resulting in locked ternary complexes. Cleavage of the nascent transcript by cleavage factors such as GreA or GreB allows the resumption of elongation from the new 3'terminus. GreA releases sequences of 2 to 3 nucleotides. In Psychromonas ingrahamii (strain DSM 17664 / CCUG 51855 / 37), this protein is Transcription elongation factor GreA.